The following is a 361-amino-acid chain: Phospho-N-acetylmuramoyl-pentapeptide-transferase (361 aa).

10 helical membrane passes run 25-45 (TGGA…WIID), 72-92 (TPTM…LLWA), 95-115 (LNPY…VGFY), 135-155 (LLIE…LGRA), 169-189 (VMLN…VGAG), 200-220 (GLAI…SYLA), 240-260 (LAVL…FNAP), 264-284 (IFMG…IAVA), 289-309 (IVLA…IVQV), and 338-358 (QIVI…LSTL).

It belongs to the glycosyltransferase 4 family. MraY subfamily. Mg(2+) serves as cofactor.

It is found in the cell inner membrane. The catalysed reaction is UDP-N-acetyl-alpha-D-muramoyl-L-alanyl-gamma-D-glutamyl-meso-2,6-diaminopimeloyl-D-alanyl-D-alanine + di-trans,octa-cis-undecaprenyl phosphate = di-trans,octa-cis-undecaprenyl diphospho-N-acetyl-alpha-D-muramoyl-L-alanyl-D-glutamyl-meso-2,6-diaminopimeloyl-D-alanyl-D-alanine + UMP. Its pathway is cell wall biogenesis; peptidoglycan biosynthesis. Functionally, catalyzes the initial step of the lipid cycle reactions in the biosynthesis of the cell wall peptidoglycan: transfers peptidoglycan precursor phospho-MurNAc-pentapeptide from UDP-MurNAc-pentapeptide onto the lipid carrier undecaprenyl phosphate, yielding undecaprenyl-pyrophosphoryl-MurNAc-pentapeptide, known as lipid I. The chain is Phospho-N-acetylmuramoyl-pentapeptide-transferase from Rhodopseudomonas palustris (strain ATCC BAA-98 / CGA009).